Reading from the N-terminus, the 309-residue chain is Postacrosomal sheath WW domain-binding protein (309 aa).

Residues 45–87 enclose the GRAM domain; the sequence is GRKTGTLFLTSYRVIFITSCSISDPMLSFMMPFDLMTNLTVEQ. Tandem repeats lie at residues 175–181, 182–188, 189–195, 217–223, 224–230, 231–237, 238–244, 245–251, 252–258, and 259–265. The segment at 175-265 is 10 X 7 AA tandem repeat of Y-G-X-P-P-X-G; sequence YGAPPAGYGA…PLGYGAPPAG (91 aa). The PPxY motif motif lies at 186-189; it reads PPGY. A compositionally biased stretch (low complexity) spans 251–272; it reads GYGAPPLGYGAPPAGNEGPPAG. The segment at 251 to 309 is disordered; that stretch reads GYGAPPLGYGAPPAGNEGPPAGYRASPAGSGARPQESTAAQAPENEASLPSASSSQVHS. The span at 298–309 shows a compositional bias: polar residues; the sequence is SLPSASSSQVHS.

Expressed in testis.

Functionally, may play a role in meiotic resumption and pronuclear formation, mediated by a WW domain-signaling pathway during fertilization. The chain is Postacrosomal sheath WW domain-binding protein (WBP2NL) from Homo sapiens (Human).